The primary structure comprises 255 residues: Ciliogenesis and planar polarity effector 2 (255 aa).

Residues 52-255 (PADIASYKLF…VIAGLVGGAD (204 aa)) are small GTPase-like. GTP-binding positions include 64-71 (GRSGAGKT) and 177-180 (TKLD).

It belongs to the small GTPase superfamily. Rab family.

Its subcellular location is the cytoplasm. It localises to the cytoskeleton. It is found in the cilium basal body. In terms of biological role, potential effector of the planar cell polarity signaling pathway. Plays a role in targeted membrane trafficking most probably at the level of vesicle fusion with membranes. Involved in cilium biogenesis by regulating the transport of cargo proteins to the basal body and to the apical tips of cilia. More generally involved in exocytosis in secretory cells. The protein is Ciliogenesis and planar polarity effector 2 (cplane2) of Xenopus tropicalis (Western clawed frog).